Reading from the N-terminus, the 163-residue chain is Shikimate kinase (163 aa).

10-15 is an ATP binding site; that stretch reads GVGKTT. Thr14 is a Mg(2+) binding site. Substrate-binding residues include Asp28, Arg52, and Gly75. Residue Arg116 participates in ATP binding. Arg134 serves as a coordination point for substrate. Arg151 contributes to the ATP binding site.

The protein belongs to the shikimate kinase family. As to quaternary structure, monomer. Mg(2+) is required as a cofactor.

The protein localises to the cytoplasm. It carries out the reaction shikimate + ATP = 3-phosphoshikimate + ADP + H(+). It functions in the pathway metabolic intermediate biosynthesis; chorismate biosynthesis; chorismate from D-erythrose 4-phosphate and phosphoenolpyruvate: step 5/7. Functionally, catalyzes the specific phosphorylation of the 3-hydroxyl group of shikimic acid using ATP as a cosubstrate. In Streptococcus pyogenes serotype M12 (strain MGAS2096), this protein is Shikimate kinase.